The chain runs to 405 residues: Cysteine desulfurase IscS (405 aa).

Pyridoxal 5'-phosphate is bound by residues 75–76 (AT), asparagine 155, glutamine 183, and 203–205 (SGH). At lysine 206 the chain carries N6-(pyridoxal phosphate)lysine. A pyridoxal 5'-phosphate-binding site is contributed by threonine 243. The active-site Cysteine persulfide intermediate is cysteine 329. Cysteine 329 is a [2Fe-2S] cluster binding site.

It belongs to the class-V pyridoxal-phosphate-dependent aminotransferase family. NifS/IscS subfamily. In terms of assembly, homodimer. Forms a heterotetramer with IscU, interacts with other sulfur acceptors. Requires pyridoxal 5'-phosphate as cofactor.

It localises to the cytoplasm. The enzyme catalyses (sulfur carrier)-H + L-cysteine = (sulfur carrier)-SH + L-alanine. The protein operates within cofactor biosynthesis; iron-sulfur cluster biosynthesis. Master enzyme that delivers sulfur to a number of partners involved in Fe-S cluster assembly, tRNA modification or cofactor biosynthesis. Catalyzes the removal of elemental sulfur atoms from cysteine to produce alanine. Functions as a sulfur delivery protein for Fe-S cluster synthesis onto IscU, an Fe-S scaffold assembly protein, as well as other S acceptor proteins. The polypeptide is Cysteine desulfurase IscS (Pseudoalteromonas translucida (strain TAC 125)).